The following is a 137-amino-acid chain: Large ribosomal subunit protein uL16 (137 aa).

Residues 1–14 (MLQPNRRKFRKEHK) show a composition bias toward basic residues. The interval 1-22 (MLQPNRRKFRKEHKGRNEGLAT) is disordered.

This sequence belongs to the universal ribosomal protein uL16 family. As to quaternary structure, part of the 50S ribosomal subunit.

Functionally, binds 23S rRNA and is also seen to make contacts with the A and possibly P site tRNAs. The chain is Large ribosomal subunit protein uL16 from Dechloromonas aromatica (strain RCB).